A 531-amino-acid polypeptide reads, in one-letter code: Polypyrimidine tract-binding protein 2 (531 aa).

M1 carries the N-acetylmethionine modification. Phosphoserine is present on residues S26 and S27. 2 consecutive RRM domains span residues 59–133 (RVLH…YSNH) and 181–257 (LRII…FSKL). S308 is subject to Phosphoserine. RRM domains are found at residues 338 to 412 (TVLL…LSKH) and 455 to 529 (ATLH…FSKS).

As to quaternary structure, monomer. Interacts with NOVA1; the interaction is direct. Identified in a mRNP complex, at least composed of DHX9, DDX3X, ELAVL1, HNRNPU, IGF2BP1, ILF3, PABPC1, PCBP2, PTBP2, STAU1, STAU2, SYNCRIP and YBX1. Part of a ternary complex containing KHSRP and HNRPH1. Interacts with NOVA2; the interaction is direct.

It is found in the nucleus. In terms of biological role, RNA-binding protein which binds to intronic polypyrimidine tracts and mediates negative regulation of exons splicing. May antagonize in a tissue-specific manner the ability of NOVA1 to activate exon selection. In addition to its function in pre-mRNA splicing, plays also a role in the regulation of translation. This chain is Polypyrimidine tract-binding protein 2, found in Rattus norvegicus (Rat).